A 112-amino-acid chain; its full sequence is Putative transmembrane protein ORF112 (112 aa).

A run of 3 helical transmembrane segments spans residues 26 to 46 (FWEVICIYYFALQGSFLGILV), 50 to 70 (ILVTTLPLLPPALFFYLMYLF), and 80 to 100 (IFFPSLDPILIPILIFFLVGV).

Its subcellular location is the host membrane. This is Putative transmembrane protein ORF112 from Acidianus convivator (ABV).